The following is a 299-amino-acid chain: MQPNKPLVVALMGPTASGKTELAIDIAKKINSNIHNIDSRQIYIDMDIGTAKPTAVQQSQVNHFLIDICLPSKPINLHDFQSIAKTSIERDLEKKGLTLLVGGSGLYLQALIGGLNPPAVPPQKFLRDQLKKIDKAERHKLLKLCDPFSAQRIHPEDSIRIIRALEVFYATGRMFSKAKNMRPTPWRVLELGLNPENLTSRIQLRTREMYKKGLVEETGDLINKYGNNLQLLKTIGYGEARSMINGKINYEEALEITIKRTCQLAKRQKTWFRNKHNSKWLNDENALPEALASIYEFLG.

13 to 20 (GPTASGKT) serves as a coordination point for ATP. 15–20 (TASGKT) is a binding site for substrate. The segment at 38 to 41 (DSRQ) is interaction with substrate tRNA.

This sequence belongs to the IPP transferase family. Monomer. It depends on Mg(2+) as a cofactor.

The enzyme catalyses adenosine(37) in tRNA + dimethylallyl diphosphate = N(6)-dimethylallyladenosine(37) in tRNA + diphosphate. Functionally, catalyzes the transfer of a dimethylallyl group onto the adenine at position 37 in tRNAs that read codons beginning with uridine, leading to the formation of N6-(dimethylallyl)adenosine (i(6)A). In Prochlorococcus marinus (strain NATL2A), this protein is tRNA dimethylallyltransferase.